Reading from the N-terminus, the 180-residue chain is Calcineurin subunit B type 1 (180 aa).

A lipid anchor (N-myristoyl glycine) is attached at Gly-2. EF-hand domains are found at residues 25–60 (AELK…ALNP), 62–92 (LERV…LSHK), 94–129 (TKED…MVGT), and 135–170 (QLQQ…QEGI). The Ca(2+) site is built by Asp-38, Asp-40, Ser-42, Thr-44, Glu-49, Asp-70, Asn-72, Asp-74, Glu-76, Glu-81, Asp-107, Asp-109, Asp-111, and Glu-118. The segment at 138–143 (QIVDKT) is canA/calcineurin A binding. Ca(2+) is bound by residues Asp-148, Asp-150, Asp-152, Lys-154, and Glu-159.

The protein belongs to the calcineurin regulatory subunit family. In terms of assembly, forms a complex composed of a calmodulin-dependent catalytic subunit canA (also known as calcineurin A) and a regulatory Ca(2+)-binding subunit cnbA (also known as calcineurin B).

Functionally, regulatory subunit of calcineurin, a calcium-dependent, calmodulin stimulated protein phosphatase. Confers calcium sensitivity. Important for stalk formation. In Dictyostelium discoideum (Social amoeba), this protein is Calcineurin subunit B type 1 (cnbA).